Reading from the N-terminus, the 895-residue chain is Stonin-2 (895 aa).

3 disordered regions span residues 15–119, 145–222, and 234–280; these read WVSF…PPHK, SESS…APPV, and EDNE…KSTL. Residues 64–73 show a composition bias toward basic and acidic residues; it reads SHSEQDDSSE. A compositionally biased stretch (polar residues) spans 145–193; the sequence is SESSWTTHSEDTSSPSVAPSYTDLQLINTEEQASGRASGTDSTDNSSSL. Positions 241–251 are enriched in pro residues; sequence PSPPVPSPKKP. Thr-253 bears the Phosphothreonine mark. Ser-278 and Ser-299 each carry phosphoserine. 2 short sequence motifs (NPF) span residues 310 to 312 and 326 to 328; these read NPF. Residues 386-421 are disordered; it reads QIDDPDPVGNTALPDDDPTASVELDAPSPASALSQP. One can recognise an SHD domain in the interval 424–557; sequence GWPMMLRIPE…DLPVLSMDLS (134 aa). One can recognise an MHD domain in the interval 565-872; the sequence is EEEITVDVRD…AHYSYKVEIE (308 aa). Phosphoserine is present on Ser-759.

This sequence belongs to the Stoned B family. Interacts with the second C2 domain of synaptotagmins SYT1 and SYT2. Interacts with EPS15, EPS15R and ITSN1. Interacts indirectly with the AP-2 adapter complex. Interacts with TOR1A and COPS4; the interaction controls STON2 protein stability. In terms of processing, phosphorylated in vitro by PKD. Neddylated; deneddylated via its interaction with the COP9 signalosome (CSN) complex through TOR1A and COPS4. Post-translationally, ubiquitinated; leading to its degradation.

It localises to the cytoplasm. It is found in the membrane. The protein resides in the synapse. Its subcellular location is the synaptosome. Adapter protein involved in endocytic machinery. Involved in the synaptic vesicle recycling. May facilitate clathrin-coated vesicle uncoating. The chain is Stonin-2 (Ston2) from Mus musculus (Mouse).